The sequence spans 68 residues: Disintegrin EMF10B (68 aa).

A Disintegrin domain is found at 1–68 (ELLQNSGNPC…SDCPRNPVFK (68 aa)). 4 cysteine pairs are disulfide-bonded: Cys10/Cys33, Cys24/Cys30, Cys29/Cys54, and Cys42/Cys61. A Cell attachment site; atypical (MGD) motif is present at residues 46–48 (MGD).

The protein belongs to the venom metalloproteinase (M12B) family. P-II subfamily. P-IIe sub-subfamily. Heterodimer with EMF10A; disulfide-linked. In terms of tissue distribution, expressed by the venom gland.

It is found in the secreted. Extremely potent and selective inhibitor of integrin alpha-5/beta-1 (ITGA5/ITGB1). Partially inhibits adhesion of cells expressing alpha-IIb/beta-3 (ITGA2B/ITGB3), alpha-V/beta-3 (ITGAV/ITGB3), and alpha-4/beta-1 (ITGA4/ITGB1) to appropriate ligands only at concentration higher than 500 nM. Weakly inhibits ADP-induced platelet aggregation. The chain is Disintegrin EMF10B from Eristicophis macmahoni (Leaf-nosed viper).